Reading from the N-terminus, the 37-residue chain is Kunitz-type proteinase inhibitor AEPI-IV (37 aa).

Residues 6–37 (CQLPAVVGRCRGRFPRYYYNTEAGKCQRFIYG) enclose the BPTI/Kunitz inhibitor domain.

This sequence belongs to the venom Kunitz-type family. Sea anemone type 2 potassium channel toxin subfamily.

The protein resides in the secreted. Its subcellular location is the nematocyst. Functionally, dual-function toxin that inhibits both the serine protease trypsin and voltage-gated potassium channels (Kv). This Actinia equina (Beadlet anemone) protein is Kunitz-type proteinase inhibitor AEPI-IV.